Reading from the N-terminus, the 78-residue chain is NAD(P)H-quinone oxidoreductase subunit O (78 aa).

Belongs to the complex I NdhO subunit family. In terms of assembly, NDH-1 can be composed of about 15 different subunits; different subcomplexes with different compositions have been identified which probably have different functions.

The protein localises to the cellular thylakoid membrane. It carries out the reaction a plastoquinone + NADH + (n+1) H(+)(in) = a plastoquinol + NAD(+) + n H(+)(out). It catalyses the reaction a plastoquinone + NADPH + (n+1) H(+)(in) = a plastoquinol + NADP(+) + n H(+)(out). Functionally, NDH-1 shuttles electrons from an unknown electron donor, via FMN and iron-sulfur (Fe-S) centers, to quinones in the respiratory and/or the photosynthetic chain. The immediate electron acceptor for the enzyme in this species is believed to be plastoquinone. Couples the redox reaction to proton translocation, and thus conserves the redox energy in a proton gradient. Cyanobacterial NDH-1 also plays a role in inorganic carbon-concentration. In Prochlorococcus marinus (strain MIT 9301), this protein is NAD(P)H-quinone oxidoreductase subunit O.